We begin with the raw amino-acid sequence, 215 residues long: Histidine biosynthesis bifunctional protein HisIE (215 aa).

Residues 1–114 (MLKKHDLLNL…FISNKYNINF (114 aa)) form a phosphoribosyl-AMP cyclohydrolase region. The segment at 115–215 (LFKLEEIIEE…LNTNSEKLLK (101 aa)) is phosphoribosyl-ATP pyrophosphohydrolase.

The protein in the N-terminal section; belongs to the PRA-CH family. This sequence in the C-terminal section; belongs to the PRA-PH family.

Its subcellular location is the cytoplasm. The enzyme catalyses 1-(5-phospho-beta-D-ribosyl)-ATP + H2O = 1-(5-phospho-beta-D-ribosyl)-5'-AMP + diphosphate + H(+). It carries out the reaction 1-(5-phospho-beta-D-ribosyl)-5'-AMP + H2O = 1-(5-phospho-beta-D-ribosyl)-5-[(5-phospho-beta-D-ribosylamino)methylideneamino]imidazole-4-carboxamide. The protein operates within amino-acid biosynthesis; L-histidine biosynthesis; L-histidine from 5-phospho-alpha-D-ribose 1-diphosphate: step 2/9. It functions in the pathway amino-acid biosynthesis; L-histidine biosynthesis; L-histidine from 5-phospho-alpha-D-ribose 1-diphosphate: step 3/9. This chain is Histidine biosynthesis bifunctional protein HisIE (hisI), found in Buchnera aphidicola subsp. Acyrthosiphon pisum (strain APS) (Acyrthosiphon pisum symbiotic bacterium).